A 619-amino-acid polypeptide reads, in one-letter code: DNA mismatch repair protein MutL (619 aa).

It belongs to the DNA mismatch repair MutL/HexB family.

This protein is involved in the repair of mismatches in DNA. It is required for dam-dependent methyl-directed DNA mismatch repair. May act as a 'molecular matchmaker', a protein that promotes the formation of a stable complex between two or more DNA-binding proteins in an ATP-dependent manner without itself being part of a final effector complex. In Xylella fastidiosa (strain 9a5c), this protein is DNA mismatch repair protein MutL.